The sequence spans 341 residues: Biotin synthase (341 aa).

One can recognise a Radical SAM core domain in the interval 43 to 266 (SEIQLSQLLS…IAVARIVCPK (224 aa)). Cysteine 58, cysteine 62, and cysteine 65 together coordinate [4Fe-4S] cluster. Residues cysteine 102, cysteine 133, cysteine 193, and arginine 270 each contribute to the [2Fe-2S] cluster site.

Belongs to the radical SAM superfamily. Biotin synthase family. Homodimer. Requires [4Fe-4S] cluster as cofactor. [2Fe-2S] cluster is required as a cofactor.

It carries out the reaction (4R,5S)-dethiobiotin + (sulfur carrier)-SH + 2 reduced [2Fe-2S]-[ferredoxin] + 2 S-adenosyl-L-methionine = (sulfur carrier)-H + biotin + 2 5'-deoxyadenosine + 2 L-methionine + 2 oxidized [2Fe-2S]-[ferredoxin]. The protein operates within cofactor biosynthesis; biotin biosynthesis; biotin from 7,8-diaminononanoate: step 2/2. Catalyzes the conversion of dethiobiotin (DTB) to biotin by the insertion of a sulfur atom into dethiobiotin via a radical-based mechanism. The sequence is that of Biotin synthase from Caulobacter vibrioides (strain ATCC 19089 / CIP 103742 / CB 15) (Caulobacter crescentus).